Consider the following 152-residue polypeptide: Flagellar assembly factor FliW (152 aa).

The protein belongs to the FliW family. In terms of assembly, interacts with translational regulator CsrA and flagellin(s).

It is found in the cytoplasm. Acts as an anti-CsrA protein, binds CsrA and prevents it from repressing translation of its target genes, one of which is flagellin. Binds to flagellin and participates in the assembly of the flagellum. The sequence is that of Flagellar assembly factor FliW from Caldicellulosiruptor saccharolyticus (strain ATCC 43494 / DSM 8903 / Tp8T 6331).